Consider the following 508-residue polypeptide: Anaerobic nitric oxide reductase transcription regulator NorR (508 aa).

Position 56 is a 4-aspartylphosphate (Asp-56). The 230-residue stretch at 186–415 (MIGQSPAMAR…LEHAIHRAAV (230 aa)) folds into the Sigma-54 factor interaction domain. ATP-binding positions include 214–221 (GETGVGKE) and 277–286 (ADQGTLFLDE). Residues 483 to 502 (WAATARALELDSGNLHRLAK) constitute a DNA-binding region (H-T-H motif).

The protein operates within nitrogen metabolism; nitric oxide reduction. Its function is as follows. Required for the expression of anaerobic nitric oxide (NO) reductase, acts as a transcriptional activator for at least the norVW operon. Activation also requires sigma-54. The chain is Anaerobic nitric oxide reductase transcription regulator NorR from Aeromonas hydrophila subsp. hydrophila (strain ATCC 7966 / DSM 30187 / BCRC 13018 / CCUG 14551 / JCM 1027 / KCTC 2358 / NCIMB 9240 / NCTC 8049).